A 265-amino-acid chain; its full sequence is 3'(2'),5'-bisphosphate nucleotidase CysQ (265 aa).

Mg(2+) contacts are provided by Glu80, Asp99, Leu101, Asp102, and Asp222. Position 80 (Glu80) interacts with substrate. Substrate contacts are provided by residues 101–104 (LDGT) and Asp222.

Belongs to the inositol monophosphatase superfamily. CysQ family. The cofactor is Mg(2+).

It is found in the cell inner membrane. It catalyses the reaction adenosine 3',5'-bisphosphate + H2O = AMP + phosphate. Converts adenosine-3',5'-bisphosphate (PAP) to AMP. The protein is 3'(2'),5'-bisphosphate nucleotidase CysQ of Buchnera aphidicola subsp. Acyrthosiphon pisum (strain APS) (Acyrthosiphon pisum symbiotic bacterium).